The primary structure comprises 94 residues: Protein canopy homolog 1 (94 aa).

This sequence belongs to the canopy family.

The protein is Protein canopy homolog 1 (Cnpy1) of Mus musculus (Mouse).